The chain runs to 563 residues: Delta-1-pyrroline-5-carboxylate dehydrogenase, mitochondrial (563 aa).

Residues 1 to 23 (MLPPALLRRSLLSYAWRGSGLRW) constitute a mitochondrion transit peptide. Lys30 carries the post-translational modification N6-succinyllysine. Ser43 is modified (phosphoserine). The residue at position 51 (Lys51) is an N6-acetyllysine. N6-acetyllysine; alternate is present on residues Lys92, Lys98, Lys113, Lys129, and Lys174. Residues Lys92, Lys98, Lys113, Lys129, and Lys174 each carry the N6-succinyllysine; alternate modification. Residues Ser207, Lys232, and 285 to 289 (GSVPT) contribute to the NAD(+) site. Glu313 (proton acceptor) is an active-site residue. Lys317 bears the N6-acetyllysine mark. The residue at position 346 (Lys346) is an N6-succinyllysine. Cys347 (nucleophile) is an active-site residue. 2 positions are modified to N6-acetyllysine: Lys364 and Lys375. The residue at position 394 (Lys394) is an N6-succinyllysine. Glu446 provides a ligand contact to NAD(+). Position 461 is an N6-acetyllysine (Lys461). N6-acetyllysine; alternate is present on Lys508. N6-succinyllysine; alternate is present on Lys508. Ser512 lines the substrate pocket.

Belongs to the aldehyde dehydrogenase family. As to quaternary structure, homodimer.

It is found in the mitochondrion matrix. It catalyses the reaction L-glutamate 5-semialdehyde + NAD(+) + H2O = L-glutamate + NADH + 2 H(+). Its pathway is amino-acid degradation; L-proline degradation into L-glutamate; L-glutamate from L-proline: step 2/2. In terms of biological role, irreversible conversion of delta-1-pyrroline-5-carboxylate (P5C), derived either from proline or ornithine, to glutamate. This is a necessary step in the pathway interconnecting the urea and tricarboxylic acid cycles. The preferred substrate is glutamic gamma-semialdehyde, other substrates include succinic, glutaric and adipic semialdehydes. This chain is Delta-1-pyrroline-5-carboxylate dehydrogenase, mitochondrial (Aldh4a1), found in Rattus norvegicus (Rat).